We begin with the raw amino-acid sequence, 579 residues long: MFLQLRAEVEDALADALTTLDLPAEDLGIEEPPEDVDAVLASSVAFRLAGEVGTAPPNVASDIADAIAADDLTYVSDVTTQGPYVNFLPSEAYFAETLQSVTESGFGRLPDRDTSVVVEHTSANPTGPVHVGRARNPIIGDAVARVLDYAGYDVDRHYYVNDAGRQIAVFTWAYETFDEDDLPEPERESPEYEMVRYYRKGNTILEDGDPDEVEAAEAEVQSILQGLEDGDEETYERVAEVVDTVLGGMQNTLGRLPAEFDEFVKETKFMRNGDTDDLVDRLKGLDCAVYEEDAWQLDLPDFEKNLVFLRSDGTSLYTTRDLAHHEWKFDTYDRAVTVLGEDHKLQADQLAAALELLDNDTDQLRQVFYSWVNLPEGGMSTREGTGIDLDDLLDEAIDRAREEVESRLDDRTRGDLDEDDIDRIARQVGIGAVRYDIVSKQPTKGITFEWDRALDFEAQSAPYVQYVHARCCGILGDVETDIPDEPDLDPLSEPEERDLLRELARFPAVIEAAADDLTPHTVATYTRDLAETFNAFYRECPVLDADPETRAARLALVDGTRTTIANALDALGVEAPTSM.

The short motif at 123 to 133 (ANPTGPVHVGR) is the 'HIGH' region element.

This sequence belongs to the class-I aminoacyl-tRNA synthetase family.

The protein resides in the cytoplasm. The catalysed reaction is tRNA(Arg) + L-arginine + ATP = L-arginyl-tRNA(Arg) + AMP + diphosphate. In Haloarcula marismortui (strain ATCC 43049 / DSM 3752 / JCM 8966 / VKM B-1809) (Halobacterium marismortui), this protein is Arginine--tRNA ligase.